A 457-amino-acid chain; its full sequence is MADS-box transcription factor 1 (457 aa).

In terms of domain architecture, MADS-box spans 11 to 71 (PSSPRRSIQR…NACHVYSSEE (61 aa)). Disordered regions lie at residues 195-278 (SGDY…SRLH) and 295-328 (SSGY…LGQE). Over residues 199–216 (SDSPLEPSSSSSFSVPPE) the composition is skewed to low complexity. Residues 218–234 (LNPTLSFQHNDVPQTDN) show a composition bias toward polar residues. The segment covering 265-278 (KNRRNGKPRISRLH) has biased composition (basic residues). Positions 295–317 (SSGYLDPSSTPITPLDSAINQIT) are enriched in polar residues. A Phosphoserine modification is found at Ser-372.

In terms of processing, phosphorylated. Occurs periodically during mitosis.

It localises to the nucleus. Functionally, acts as a transcriptional activator with a role in the regulation of mitosis. Regulates septation and the periodic transcription of cdc15. This chain is MADS-box transcription factor 1 (mbx1), found in Schizosaccharomyces pombe (strain 972 / ATCC 24843) (Fission yeast).